We begin with the raw amino-acid sequence, 764 residues long: Molybdenum cofactor sulfurase 3 (764 aa).

An N6-(pyridoxal phosphate)lysine modification is found at Lys228. The active site involves Cys394. Positions 607–762 constitute an MOSC domain; sequence LRLLKQSDEE…LYCNSVVEGL (156 aa).

The protein belongs to the class-V pyridoxal-phosphate-dependent aminotransferase family. MOCOS subfamily. Pyridoxal 5'-phosphate is required as a cofactor.

It carries out the reaction Mo-molybdopterin + L-cysteine + AH2 = thio-Mo-molybdopterin + L-alanine + A + H2O. Sulfurates the molybdenum cofactor. Sulfation of molybdenum is essential for xanthine dehydrogenase (XDH) and aldehyde oxidase (ADO) enzymes in which molybdenum cofactor is liganded by 1 oxygen and 1 sulfur atom in active form. In Aedes aegypti (Yellowfever mosquito), this protein is Molybdenum cofactor sulfurase 3.